We begin with the raw amino-acid sequence, 305 residues long: Methionyl-tRNA formyltransferase (305 aa).

A (6S)-5,6,7,8-tetrahydrofolate-binding site is contributed by 111-114; the sequence is SLLP.

Belongs to the Fmt family.

The catalysed reaction is L-methionyl-tRNA(fMet) + (6R)-10-formyltetrahydrofolate = N-formyl-L-methionyl-tRNA(fMet) + (6S)-5,6,7,8-tetrahydrofolate + H(+). Its function is as follows. Attaches a formyl group to the free amino group of methionyl-tRNA(fMet). The formyl group appears to play a dual role in the initiator identity of N-formylmethionyl-tRNA by promoting its recognition by IF2 and preventing the misappropriation of this tRNA by the elongation apparatus. The polypeptide is Methionyl-tRNA formyltransferase (Campylobacter jejuni subsp. jejuni serotype O:2 (strain ATCC 700819 / NCTC 11168)).